Reading from the N-terminus, the 317-residue chain is MAETEAGLEADEPTEDDTLPSDTVSLSDSDSDLSLPSGVEVQVLSPERLSEEGQEDSGPEDPPSPPTGTLTTAVQPFHLRGMSSTFSQRSHSIFDCLESAARQAPCSAPQTSVSDNGSFRRPVTPPSQTPARGLSRVHGNTGPTRVLPVPDYVSHPERWTKYSLEDVSEASEQSNRDAALAFLSSRSQVSHTDYVPSFNQDPSSCGEGRVVFTKPVRDSEARAERKRVLKKGVGSGAGGEAAVELAHLAGPEAEEWSGHQGQPEVVVPSEAAHPESSSGPIGVKAVGFHGSKKRSRDHFRNRDGNPGGPGSERGPSV.

A compositionally biased stretch (acidic residues) spans Met-1–Leu-19. A disordered region spans residues Met-1–Val-74. The span at Pro-20 to Ser-37 shows a compositional bias: low complexity. Residues Ser-57, Ser-64, Ser-83, and Ser-92 each carry the phosphoserine modification. The hom2; mediates interaction with the U5 snRNP complexes and required for spliceosomal tri-snRNP complex assembly stretch occupies residues Val-74–Ala-101. The segment at Ala-101–Tyr-152 is disordered. A compositionally biased stretch (polar residues) spans Ala-108–Gly-117. Thr-124 carries the post-translational modification Phosphothreonine. The tract at residues Val-146 to Arg-300 is interaction with SNRNP200. The tract at residues Leu-147 to Leu-183 is hom3; mediates interaction with the U5 snRNP complexes. A hom4; necessary for interaction with the PRPF19 complex and required for spliceosomal tri-snRNP complex assembly region spans residues Phe-198–Gly-238. Position 214 is an N6-acetyllysine (Lys-214). Positions Val-216–Val-317 are disordered. Residues Glu-240 to Gly-250 are compositionally biased toward low complexity.

The protein belongs to the TSSC4 family. As to quaternary structure, interacts in a RNA-independent manner with distinct U5 snRNP-containing complexes, the mono-U5 snRNP and the post-splicing U5 snRNP-PRPF19 complex. Interacts with SNRNP200; the interaction is direct, excludes recruitment of C9ORF78 and WBP4 to SNRNP200 and negatively regulates its RNA helicase activity. Interacts with PRPF8; the interaction is direct. As to expression, expressed in placenta. Widely expressed in embryo and newborn.

The protein resides in the nucleus. It is found in the cytoplasm. Protein associated with the U5 snRNP, during its maturation and its post-splicing recycling and which is required for spliceosomal tri-snRNP complex assembly in the nucleus. Has a molecular sequestering activity and transiently hinders SNRNP200 binding sites for constitutive splicing factors that intervene later during the assembly of the spliceosome and splicing. Together with its molecular sequestering activity, may also function as a molecular adapter and placeholder, coordinating the assembly of the U5 snRNP and its association with the U4/U6 di-snRNP. This is U5 small nuclear ribonucleoprotein TSSC4 from Mus musculus (Mouse).